Here is a 367-residue protein sequence, read N- to C-terminus: Ataxin-7-like protein 3 (367 aa).

Residues 84–105 form an SGF11-type zinc finger; the sequence is CVCPNCSRSIAASRFAPHLEKC. Over residues 116-125 the composition is skewed to low complexity; sequence ANRRIASSNN. The interval 116–184 is disordered; it reads ANRRIASSNN…GELSGSVNPD (69 aa). The span at 132 to 141 shows a compositional bias: acidic residues; it reads DQEDNDDIND. Residues 199–266 enclose the SCA7 domain; sequence LGPEELRSIL…TMLENEAYEP (68 aa). Residues 280 to 299 show a composition bias toward low complexity; that stretch reads ASSDISPSDSASSKASTNNS. The disordered stretch occupies residues 280 to 367; sequence ASSDISPSDS…PAPSIYDDLN (88 aa). A compositionally biased stretch (basic and acidic residues) spans 318-329; it reads GERDKAQERDRI. Positions 330–346 are enriched in low complexity; that stretch reads AGSGSSGSSSQNALGLS.

The protein belongs to the SGF11 family. In terms of assembly, component of some SAGA transcription coactivator-HAT complexes. Within the SAGA complex, participates in a subcomplex of SAGA called the DUB module (deubiquitination module).

The protein resides in the nucleus. Its function is as follows. Component of the transcription regulatory histone acetylation (HAT) complex SAGA, a multiprotein complex that activates transcription by remodeling chromatin and mediating histone acetylation and deubiquitination. Within the SAGA complex, participates in a subcomplex that specifically deubiquitinates histone H2B. The SAGA complex is recruited to specific gene promoters by activators, where it is required for transcription. This chain is Ataxin-7-like protein 3 (atxn7l3), found in Danio rerio (Zebrafish).